We begin with the raw amino-acid sequence, 442 residues long: D-serine dehydratase (442 aa).

An N6-(pyridoxal phosphate)lysine modification is found at Lys-118.

The protein belongs to the serine/threonine dehydratase family. DsdA subfamily. In terms of assembly, monomer. Pyridoxal 5'-phosphate serves as cofactor.

The catalysed reaction is D-serine = pyruvate + NH4(+). This chain is D-serine dehydratase, found in Escherichia coli (strain K12 / MC4100 / BW2952).